The sequence spans 426 residues: Glutamate-1-semialdehyde 2,1-aminomutase (426 aa).

Lys-265 is modified (N6-(pyridoxal phosphate)lysine).

This sequence belongs to the class-III pyridoxal-phosphate-dependent aminotransferase family. HemL subfamily. As to quaternary structure, homodimer. Pyridoxal 5'-phosphate serves as cofactor.

The protein resides in the cytoplasm. The catalysed reaction is (S)-4-amino-5-oxopentanoate = 5-aminolevulinate. It functions in the pathway porphyrin-containing compound metabolism; protoporphyrin-IX biosynthesis; 5-aminolevulinate from L-glutamyl-tRNA(Glu): step 2/2. This Akkermansia muciniphila (strain ATCC BAA-835 / DSM 22959 / JCM 33894 / BCRC 81048 / CCUG 64013 / CIP 107961 / Muc) protein is Glutamate-1-semialdehyde 2,1-aminomutase.